The primary structure comprises 182 residues: DNA-directed RNA polymerase 30 kDa polypeptide (182 aa).

A TFIIS-type zinc finger spans residues 135–175 (STIRCVACKSNNTIPMILQTRSSDEEPTVRVVCKDCGKNFA). The Zn(2+) site is built by Cys-139, Cys-142, Cys-167, and Cys-170.

It belongs to the poxviridae DNA-directed RNA polymerase 30 kDa subunit family. This enzyme consists of at least eight subunits.

The catalysed reaction is RNA(n) + a ribonucleoside 5'-triphosphate = RNA(n+1) + diphosphate. Functionally, DNA-dependent RNA polymerase catalyzes the transcription of DNA into RNA using the four ribonucleoside triphosphates as substrates. Rpo30 may have a role in RNA chain elongation. The protein is DNA-directed RNA polymerase 30 kDa polypeptide (RPO30) of Fowlpox virus (strain NVSL) (FPV).